We begin with the raw amino-acid sequence, 184 residues long: uncharacterized protein (184 aa).

The first 20 residues, 1-20 (MKKQILALVCGVIFSSSTWA), serve as a signal peptide directing secretion.

This sequence to E.coli YtfJ.

The protein resides in the periplasm. This is an uncharacterized protein from Haemophilus influenzae (strain ATCC 51907 / DSM 11121 / KW20 / Rd).